Consider the following 827-residue polypeptide: Stage II sporulation protein E (827 aa).

The next 10 helical transmembrane spans lie at 49–69, 71–91, 116–136, 142–162, 175–195, 206–226, 247–267, 269–289, 299–319, and 320–340; these read IGFL…ALPF, GAML…VLAG, VAAF…FFSM, GFVY…AIVE, QSLP…EEII, TGLA…ARYV, GLIL…LAFS, LLGG…LIVG, GSAG…LFLL, and TPQS…EHLQ. The Cytoplasmic portion of the chain corresponds to 341–827; it reads EQQQYARKIR…AIFQNKQEIS (487 aa). The PPM-type phosphatase domain maps to 594 to 804; sequence STGAAHAAKG…DDMTVVVVRI (211 aa).

Requires Mn(2+) as cofactor.

The protein resides in the cell membrane. The catalysed reaction is O-phospho-L-seryl-[protein] + H2O = L-seryl-[protein] + phosphate. It catalyses the reaction O-phospho-L-threonyl-[protein] + H2O = L-threonyl-[protein] + phosphate. Normally needed for pro-sigma E processing during sporulation but can be bypassed in vegetative cells. Activates SpoIIAA by dephosphorylation. This chain is Stage II sporulation protein E (spoIIE), found in Bacillus subtilis (strain 168).